The sequence spans 390 residues: MKFVDEASILVVAGDGGNGCVSFRREKYIPKGGPDGGDGGDGGDVWMEADENLNTLIDYRFEKSFRAERGQNGASRDCTGKRGKDVTIKVPVGTRVIDQGTGETMGDMTKHGQRLLVAKGGWHGLGNTRFKSSVNRTPRQKTNGTPGDKRDLLLELMLLADVGMLGMPNAGKSTFIRAVSAAKPKVADYPFTTLVPSLGVVRMDSEKSFVVADIPGLIEGAAEGAGLGIRFLKHLERCRVLLHLIDIDPIDGSDPVENARIIIGELEKYSQDLAAKPRWLVFNKIDLMDKTEAEEKAKAIAEALGWEGKYYLISAASQLGVKDLCWDVMTFIIENPIAQAEEAKQPEKVEFMWDDYHRQQLAEVEEDADDDWDDDWDEDDEEGVEFIYKR.

The 159-residue stretch at 1–159 (MKFVDEASIL…RDLLLELMLL (159 aa)) folds into the Obg domain. Residues 127-147 (NTRFKSSVNRTPRQKTNGTPG) are disordered. A compositionally biased stretch (polar residues) spans 129–145 (RFKSSVNRTPRQKTNGT). Positions 160–333 (ADVGMLGMPN…LCWDVMTFII (174 aa)) constitute an OBG-type G domain. Residues 166-173 (GMPNAGKS), 191-195 (FTTLV), 213-216 (DIPG), 283-286 (NKID), and 314-316 (SAA) contribute to the GTP site. Positions 173 and 193 each coordinate Mg(2+).

Belongs to the TRAFAC class OBG-HflX-like GTPase superfamily. OBG GTPase family. As to quaternary structure, monomer. Mg(2+) serves as cofactor.

It localises to the cytoplasm. Its function is as follows. An essential GTPase which binds GTP, GDP and possibly (p)ppGpp with moderate affinity, with high nucleotide exchange rates and a fairly low GTP hydrolysis rate. Plays a role in control of the cell cycle, stress response, ribosome biogenesis and in those bacteria that undergo differentiation, in morphogenesis control. This is GTPase Obg from Salmonella paratyphi A (strain ATCC 9150 / SARB42).